Consider the following 128-residue polypeptide: Fluoride-specific ion channel FluC (128 aa).

A run of 4 helical transmembrane segments spans residues 2-22 (LTFA…GAWL), 37-57 (WGTL…VALI), 65-85 (AWIR…FSTF), and 101-121 (AAAY…LGLA). Positions 77 and 80 each coordinate Na(+).

It belongs to the fluoride channel Fluc/FEX (TC 1.A.43) family.

Its subcellular location is the cell inner membrane. The enzyme catalyses fluoride(in) = fluoride(out). With respect to regulation, na(+) is not transported, but it plays an essential structural role and its presence is essential for fluoride channel function. Functionally, fluoride-specific ion channel. Important for reducing fluoride concentration in the cell, thus reducing its toxicity. In Bordetella bronchiseptica (strain ATCC BAA-588 / NCTC 13252 / RB50) (Alcaligenes bronchisepticus), this protein is Fluoride-specific ion channel FluC.